Here is a 438-residue protein sequence, read N- to C-terminus: (S)-3,5-dihydroxyphenylglycine transaminase (438 aa).

Residue Lys-266 is modified to N6-(pyridoxal phosphate)lysine.

Belongs to the class-I pyridoxal-phosphate-dependent aminotransferase family. The cofactor is pyridoxal 5'-phosphate.

It catalyses the reaction (S)-3,5-dihydroxyphenylglycine + 2-oxoglutarate = 2-(3,5-dihydroxyphenyl)-2-oxoacetate + L-glutamate. The protein operates within antibiotic biosynthesis; vancomycin biosynthesis. Catalyzes the transamination of p-hydroxybenzoylformate to L-p-hydroxyphenylglycine as part of the biosynthesis of the (S)-3,5-dihydroxyphenylglycine constituent of the glycopeptide antibiotic chloroeremomycin, a member of the vancomycin group of antibiotics. The sequence is that of (S)-3,5-dihydroxyphenylglycine transaminase (hpgT) from Amycolatopsis orientalis (Nocardia orientalis).